The following is a 181-amino-acid chain: Large ribosomal subunit protein uL10 (181 aa).

Belongs to the universal ribosomal protein uL10 family. In terms of assembly, part of the ribosomal stalk of the 50S ribosomal subunit. The N-terminus interacts with L11 and the large rRNA to form the base of the stalk. The C-terminus forms an elongated spine to which L12 dimers bind in a sequential fashion forming a multimeric L10(L12)X complex.

Functionally, forms part of the ribosomal stalk, playing a central role in the interaction of the ribosome with GTP-bound translation factors. The polypeptide is Large ribosomal subunit protein uL10 (Acidobacterium capsulatum (strain ATCC 51196 / DSM 11244 / BCRC 80197 / JCM 7670 / NBRC 15755 / NCIMB 13165 / 161)).